The sequence spans 1374 residues: Ribonuclease 3 (1374 aa).

Disordered regions lie at residues 1–95 (MMQG…PLPP), 130–406 (PPVP…EEEE), and 452–497 (LGSR…SSSS). Residues 59-68 (PSTTFSNSPA) show a composition bias toward polar residues. 2 stretches are compositionally biased toward pro residues: residues 70-95 (NFLPPRPDFVPFPPPMPPSAQGPLPP) and 145-160 (MMPPPSMPHPPPPPVM). Positions 182-202 (FNSFQNNPSSFLPSANNSSSP) are enriched in low complexity. Basic and acidic residues-rich tracts occupy residues 216 to 289 (PSER…ERER) and 298 to 313 (RRSPSLERSYKKEYKR). Phosphoserine is present on residues serine 355 and serine 373. Residues 364 to 399 (RWEEEKDRWSDNQSSGKDKNYTSIKEKEPEETMPDK) show a composition bias toward basic and acidic residues. A necessary for interaction with DGCR8 and pri-miRNA processing activity region spans residues 390–1365 (KEPEETMPDK…RWEREHQERE (976 aa)). Residues 475 to 491 (EDLESSSESECESDEDS) are compositionally biased toward acidic residues. Residues cysteine 536, cysteine 538, histidine 549, cysteine 561, histidine 609, cysteine 676, and histidine 680 each coordinate Zn(2+). RNase III domains follow at residues 876-1056 (LMHL…LEGS) and 1107-1233 (LTEF…IDKD). Glutamate 969 is a Mg(2+) binding site. Histidine 1026 contributes to the Zn(2+) binding site. Mg(2+) contacts are provided by asparagine 1042, glutamate 1045, glutamate 1147, aspartate 1219, and glutamate 1222. Residues 1260–1334 (DPKSQLQQCC…AMDALEKYNF (75 aa)) form the DRBM domain.

The protein belongs to the ribonuclease III family. Component of the microprocessor complex, or pri-miRNA processing protein complex, which is composed of DROSHA and DGCR8. The microprocessor complex is a heterotrimer; each of the two DROSHA RNase III domains binds one DGCR8 (via C-terminal region). Interacts with SP1 and SNIP1. Interacts with SRRT/ARS2. Interacts with CPSF3 and ISY1; this interaction is in an RNA dependent manner. Interacts with PUS10; interaction promotes pri-miRNAs processing. The cofactor is Mg(2+). Mn(2+) serves as cofactor. Degraded by autophagy in response to neuronal activity in motor neurons. As to expression, ubiquitous.

It is found in the nucleus. Its subcellular location is the nucleolus. The protein resides in the cytoplasm. The catalysed reaction is Endonucleolytic cleavage to 5'-phosphomonoester.. Its function is as follows. Ribonuclease III double-stranded (ds) RNA-specific endoribonuclease that is involved in the initial step of microRNA (miRNA) biogenesis. Component of the microprocessor complex that is required to process primary miRNA transcripts (pri-miRNAs) to release precursor miRNA (pre-miRNA) in the nucleus. Within the microprocessor complex, DROSHA cleaves the 3' and 5' strands of a stem-loop in pri-miRNAs (processing center 11 bp from the dsRNA-ssRNA junction) to release hairpin-shaped pre-miRNAs that are subsequently cut by the cytoplasmic DICER to generate mature miRNAs. Involved also in pre-rRNA processing. Cleaves double-strand RNA and does not cleave single-strand RNA. Involved in the formation of GW bodies. Plays a role in growth homeostasis in response to autophagy in motor neurons. This chain is Ribonuclease 3 (DROSHA), found in Homo sapiens (Human).